A 480-amino-acid chain; its full sequence is UDP-glucose 6-dehydrogenase 3 (480 aa).

NAD(+) contacts are provided by residues 8–13 (GAGYVG), Asp-33, Arg-38, 86–90 (VNTPT), 127–128 (ST), and Glu-161. Residues 157–161 (EFLAE), 216–223 (KLAANAFL), and 256–269 (RIGPKFLNASVGFG) each bind substrate. The Nucleophile role is filled by Cys-272. 272 to 275 (CFQK) provides a ligand contact to NAD(+). 334-335 (FK) serves as a coordination point for substrate. Arg-342 provides a ligand contact to NAD(+). A Phosphoserine modification is found at Ser-393. Substrate is bound at residue Arg-447.

Belongs to the UDP-glucose/GDP-mannose dehydrogenase family.

It carries out the reaction UDP-alpha-D-glucose + 2 NAD(+) + H2O = UDP-alpha-D-glucuronate + 2 NADH + 3 H(+). Its pathway is nucleotide-sugar biosynthesis; UDP-alpha-D-glucuronate biosynthesis; UDP-alpha-D-glucuronate from UDP-alpha-D-glucose: step 1/1. Functionally, involved in the biosynthesis of UDP-glucuronic acid (UDP-GlcA), providing nucleotide sugars for cell-wall polymers. This Oryza sativa subsp. japonica (Rice) protein is UDP-glucose 6-dehydrogenase 3 (UGD3).